Here is a 611-residue protein sequence, read N- to C-terminus: Dihydroxy-acid dehydratase (611 aa).

D81 lines the Mg(2+) pocket. A [2Fe-2S] cluster-binding site is contributed by C122. D123 and K124 together coordinate Mg(2+). K124 bears the N6-carboxylysine mark. C195 lines the [2Fe-2S] cluster pocket. E491 is a Mg(2+) binding site. The Proton acceptor role is filled by S517.

Belongs to the IlvD/Edd family. Homodimer. [2Fe-2S] cluster is required as a cofactor. It depends on Mg(2+) as a cofactor.

The catalysed reaction is (2R)-2,3-dihydroxy-3-methylbutanoate = 3-methyl-2-oxobutanoate + H2O. The enzyme catalyses (2R,3R)-2,3-dihydroxy-3-methylpentanoate = (S)-3-methyl-2-oxopentanoate + H2O. It functions in the pathway amino-acid biosynthesis; L-isoleucine biosynthesis; L-isoleucine from 2-oxobutanoate: step 3/4. It participates in amino-acid biosynthesis; L-valine biosynthesis; L-valine from pyruvate: step 3/4. In terms of biological role, functions in the biosynthesis of branched-chain amino acids. Catalyzes the dehydration of (2R,3R)-2,3-dihydroxy-3-methylpentanoate (2,3-dihydroxy-3-methylvalerate) into 2-oxo-3-methylpentanoate (2-oxo-3-methylvalerate) and of (2R)-2,3-dihydroxy-3-methylbutanoate (2,3-dihydroxyisovalerate) into 2-oxo-3-methylbutanoate (2-oxoisovalerate), the penultimate precursor to L-isoleucine and L-valine, respectively. The protein is Dihydroxy-acid dehydratase of Allorhizobium ampelinum (strain ATCC BAA-846 / DSM 112012 / S4) (Agrobacterium vitis (strain S4)).